The sequence spans 291 residues: 2-C-methyl-D-erythritol 4-phosphate cytidylyltransferase (291 aa).

The segment at 1–23 (MTERDFDTPVETPTVQPAPAQGT) is disordered.

It belongs to the IspD/TarI cytidylyltransferase family. IspD subfamily.

It carries out the reaction 2-C-methyl-D-erythritol 4-phosphate + CTP + H(+) = 4-CDP-2-C-methyl-D-erythritol + diphosphate. It functions in the pathway isoprenoid biosynthesis; isopentenyl diphosphate biosynthesis via DXP pathway; isopentenyl diphosphate from 1-deoxy-D-xylulose 5-phosphate: step 2/6. Catalyzes the formation of 4-diphosphocytidyl-2-C-methyl-D-erythritol from CTP and 2-C-methyl-D-erythritol 4-phosphate (MEP). This is 2-C-methyl-D-erythritol 4-phosphate cytidylyltransferase from Bifidobacterium longum subsp. infantis (strain ATCC 15697 / DSM 20088 / JCM 1222 / NCTC 11817 / S12).